We begin with the raw amino-acid sequence, 63 residues long: Rubredoxin-2 (63 aa).

One can recognise a Rubredoxin-like domain in the interval 8 to 59 (YKLFRCLQCGFEYDEAIGWPDDGIEPGTRWDEIPEDWSCPDCGAAKVDFEMV). 4 residues coordinate Fe cation: Cys13, Cys16, Cys46, and Cys49.

It belongs to the rubredoxin family. Fe(3+) serves as cofactor.

Functionally, involved in the hydrocarbon hydroxylating system, which transfers electrons from NADH to rubredoxin reductase and then through rubredoxin to alkane 1 monooxygenase. The protein is Rubredoxin-2 (rubA2) of Rhodococcus erythropolis (Arthrobacter picolinophilus).